The sequence spans 343 residues: Cyclin-Y-like protein 1-B (343 aa).

Residues Met1–Ala69 form a disordered region. The span at Ala17–Glu28 shows a compositional bias: basic and acidic residues. The region spanning Asp145–Asn267 is the Cyclin N-terminal domain.

Belongs to the cyclin family. Cyclin Y subfamily.

The sequence is that of Cyclin-Y-like protein 1-B (ccnyl1-b) from Xenopus laevis (African clawed frog).